The sequence spans 889 residues: DNA gyrase subunit A (889 aa).

Residues 35-501 (LPDVRDGLKP…GFEDLEDEDL (467 aa)) enclose the Topo IIA-type catalytic domain. The active-site O-(5'-phospho-DNA)-tyrosine intermediate is Tyr123. Positions 528 to 534 (QNRGGRG) match the GyrA-box motif. The segment at 810-889 (VKEDAEDETN…IQQSSDEDEE (80 aa)) is disordered. The segment covering 813 to 823 (DAEDETNEDEQ) has biased composition (acidic residues). Basic and acidic residues predominate over residues 863–875 (DGRIEVRQDFMDR). The span at 876–889 (VEEDIQQSSDEDEE) shows a compositional bias: acidic residues.

This sequence belongs to the type II topoisomerase GyrA/ParC subunit family. As to quaternary structure, heterotetramer, composed of two GyrA and two GyrB chains. In the heterotetramer, GyrA contains the active site tyrosine that forms a transient covalent intermediate with DNA, while GyrB binds cofactors and catalyzes ATP hydrolysis.

The protein resides in the cytoplasm. The enzyme catalyses ATP-dependent breakage, passage and rejoining of double-stranded DNA.. Functionally, a type II topoisomerase that negatively supercoils closed circular double-stranded (ds) DNA in an ATP-dependent manner to modulate DNA topology and maintain chromosomes in an underwound state. Negative supercoiling favors strand separation, and DNA replication, transcription, recombination and repair, all of which involve strand separation. Also able to catalyze the interconversion of other topological isomers of dsDNA rings, including catenanes and knotted rings. Type II topoisomerases break and join 2 DNA strands simultaneously in an ATP-dependent manner. This Staphylococcus aureus (strain N315) protein is DNA gyrase subunit A.